Consider the following 475-residue polypeptide: Putative F-box protein At3g58960 (475 aa).

The F-box domain maps to 1–49 (MDRISSLSNDIISNIVSFLSAKDAAVASVLSKRWQNIYTIVPNLEFDNT).

This Arabidopsis thaliana (Mouse-ear cress) protein is Putative F-box protein At3g58960.